A 449-amino-acid polypeptide reads, in one-letter code: MSHSASPKPATARRSEALTGEIRIPGDKSISHRSFMFGGLASGETRITGLLEGEDVINTGRAMQAMGAKIRKEGDVWIINGVGNGCLLQPEAALDFGNAGTGARLTMGLVGTYDMKTSFIGDASLSKRPMGRVLNPLREMGVQVEAADGDRMPLTLIGPKTANPITYRVPMASAQVKSAVLLAGLNTPGVTTVIEPVMTRDHTEKMLQGFGADLTVETDKDGVRHIRITGQGKLVGQTIDVPGDPSSTAFPLVAALLVEGSDVTIRNVLMNPTRTGLILTLQEMGADIEVLNARLAGGEDVADLRVRASKLKGVVVPPERAPSMIDEYPVLAIAASFAEGETVMDGLDELRVKESDRLAAVARGLEANGVDCTEGEMSLTVRGRPDGKGLGGGTVATHLDHRIAMSFLVMGLAAEKPVTVDDSNMIATSFPEFMDMMPGLGAKIELSIL.

The interval 1–23 (MSHSASPKPATARRSEALTGEIR) is disordered. 3-phosphoshikimate contacts are provided by K28, S29, and R33. K28 is a binding site for phosphoenolpyruvate. Phosphoenolpyruvate is bound by residues G100 and R128. Residues S173, Q175, D326, and K353 each coordinate 3-phosphoshikimate. Phosphoenolpyruvate is bound at residue Q175. Residue D326 is the Proton acceptor of the active site. Residues R357 and R402 each contribute to the phosphoenolpyruvate site.

It belongs to the EPSP synthase family. Monomer.

Its subcellular location is the cytoplasm. It catalyses the reaction 3-phosphoshikimate + phosphoenolpyruvate = 5-O-(1-carboxyvinyl)-3-phosphoshikimate + phosphate. Its pathway is metabolic intermediate biosynthesis; chorismate biosynthesis; chorismate from D-erythrose 4-phosphate and phosphoenolpyruvate: step 6/7. Its function is as follows. Catalyzes the transfer of the enolpyruvyl moiety of phosphoenolpyruvate (PEP) to the 5-hydroxyl of shikimate-3-phosphate (S3P) to produce enolpyruvyl shikimate-3-phosphate and inorganic phosphate. In Pseudomonas sp. (strain PG2982), this protein is 3-phosphoshikimate 1-carboxyvinyltransferase.